The chain runs to 357 residues: UDP-3-O-acylglucosamine N-acyltransferase (357 aa).

His251 (proton acceptor) is an active-site residue.

Belongs to the transferase hexapeptide repeat family. LpxD subfamily. As to quaternary structure, homotrimer.

The catalysed reaction is a UDP-3-O-[(3R)-3-hydroxyacyl]-alpha-D-glucosamine + a (3R)-hydroxyacyl-[ACP] = a UDP-2-N,3-O-bis[(3R)-3-hydroxyacyl]-alpha-D-glucosamine + holo-[ACP] + H(+). Its pathway is bacterial outer membrane biogenesis; LPS lipid A biosynthesis. Catalyzes the N-acylation of UDP-3-O-acylglucosamine using 3-hydroxyacyl-ACP as the acyl donor. Is involved in the biosynthesis of lipid A, a phosphorylated glycolipid that anchors the lipopolysaccharide to the outer membrane of the cell. The chain is UDP-3-O-acylglucosamine N-acyltransferase from Ralstonia pickettii (strain 12J).